A 370-amino-acid polypeptide reads, in one-letter code: Chaperone protein DnaJ (370 aa).

Residues 5 to 70 (DYYEVLGVSK…EKRSMYDRMG (66 aa)) form the J domain. A CR-type zinc finger spans residues 134-212 (GVKKTITFTA…CHGSGVADRQ (79 aa)). Zn(2+) contacts are provided by C147, C150, C164, C167, C186, C189, C200, and C203. 4 CXXCXGXG motif repeats span residues 147–154 (CDVCDGKG), 164–171 (CKTCHGSG), 186–193 (CGTCRGQG), and 200–207 (CHACHGSG). The segment at 351 to 370 (DGEDSASSPKKKSFFDRLFD) is disordered.

This sequence belongs to the DnaJ family. As to quaternary structure, homodimer. It depends on Zn(2+) as a cofactor.

It localises to the cytoplasm. Participates actively in the response to hyperosmotic and heat shock by preventing the aggregation of stress-denatured proteins and by disaggregating proteins, also in an autonomous, DnaK-independent fashion. Unfolded proteins bind initially to DnaJ; upon interaction with the DnaJ-bound protein, DnaK hydrolyzes its bound ATP, resulting in the formation of a stable complex. GrpE releases ADP from DnaK; ATP binding to DnaK triggers the release of the substrate protein, thus completing the reaction cycle. Several rounds of ATP-dependent interactions between DnaJ, DnaK and GrpE are required for fully efficient folding. Also involved, together with DnaK and GrpE, in the DNA replication of plasmids through activation of initiation proteins. This is Chaperone protein DnaJ from Acinetobacter baumannii (strain AB0057).